A 336-amino-acid polypeptide reads, in one-letter code: UPF0324 membrane protein SP_0034 (336 aa).

The next 8 helical transmembrane spans lie at 65-84, 91-113, 118-140, 153-175, 211-233, 249-271, 286-305, and 312-334; these read LLQYAVVLLGFGLNISQVFA, PVILSTISIALIIAYLFQRFFAL, ATLVGVGSSICGGSAIAATAPVI, VIFFFNVLAALIFPTLGTWLHLS, SATIVKLTRTLAIIPITLFLSYW, VFPLFILYFILASLLTTLLTSLG, FLIVMAMSAIGLKTNLVAMV, and ILLGAICWIAIILTTLGMQTLIG.

It belongs to the UPF0324 family.

It localises to the cell membrane. The sequence is that of UPF0324 membrane protein SP_0034 from Streptococcus pneumoniae serotype 4 (strain ATCC BAA-334 / TIGR4).